The chain runs to 153 residues: Large ribosomal subunit protein uL15 (153 aa).

Residues 21–41 (RGIGSGKGKTGGRGIKGQKSR) are disordered. Residues 23–35 (IGSGKGKTGGRGI) are compositionally biased toward gly residues.

This sequence belongs to the universal ribosomal protein uL15 family. Part of the 50S ribosomal subunit.

Functionally, binds to the 23S rRNA. This is Large ribosomal subunit protein uL15 from Rickettsia massiliae (strain Mtu5).